Reading from the N-terminus, the 110-residue chain is DNA-binding protein Mhun_3016 (110 aa).

This sequence belongs to the PDCD5 family.

This chain is DNA-binding protein Mhun_3016, found in Methanospirillum hungatei JF-1 (strain ATCC 27890 / DSM 864 / NBRC 100397 / JF-1).